Reading from the N-terminus, the 131-residue chain is Probable calcium-binding protein CML34 (131 aa).

EF-hand domains are found at residues 1-33 (MSAKRVFEKFDKNKDGKLSLDEFREVALAFSPY), 34-69 (FTQEDIVKFFEEIDVDGNGELNADEFTSCIEKMLKE), 70-97 (VFVFCDVDGDGKIPASESYVTMTSLGKK), and 98-131 (FTEETSAEKVRAADVDGDGYLNFDEFMALVIGDI). Residues Asp-11, Asn-13, Asp-15, Lys-17, Glu-22, Asp-47, Asp-49, Asn-51, Glu-53, and Glu-58 each coordinate Ca(2+). Asp-111, Asp-113, Asp-115, Tyr-117, and Glu-122 together coordinate Ca(2+).

Potential calcium sensor. This chain is Probable calcium-binding protein CML34 (CML34), found in Arabidopsis thaliana (Mouse-ear cress).